An 870-amino-acid polypeptide reads, in one-letter code: Protein csx2 (870 aa).

A disordered region spans residues 212–251; sequence TSPEISDAPPLSGNVDPLPINSPPLTNPVARDIDQTEPED. The PH domain occupies 510-614; the sequence is TSAKQGLLLA…WIEAIQYSIS (105 aa). A phosphoserine mark is found at Ser-625, Ser-653, and Ser-655. The interval 647–672 is disordered; it reads RVASVTSPSRHNSDSKEKKQTKSPSL. Over residues 657–666 the composition is skewed to basic and acidic residues; the sequence is HNSDSKEKKQ. In terms of domain architecture, Arf-GAP spans 670-791; it reads PSLVKTLKEM…RFIKSSFSHD (122 aa). Residues 686–710 form a C4-type zinc finger; the sequence is CADCNTTARVEWCAINFPVVLCIDC.

The polypeptide is Protein csx2 (csx2) (Schizosaccharomyces pombe (strain 972 / ATCC 24843) (Fission yeast)).